A 375-amino-acid polypeptide reads, in one-letter code: Acyl-coenzyme A diphosphatase NUDT19 (375 aa).

The Nudix hydrolase domain maps to 15-263 (AASIVLAAGW…IWLPPPQFYE (249 aa)). The disordered stretch occupies residues 91–116 (LGPAPFSRTAFPSLPDTDDHKTDNTG). Positions 116 to 137 (GTLPEDVAFRICAVREAFEEAG) match the Nudix box motif. 2 residues coordinate Mg(2+): glutamate 131 and glutamate 135. The Microbody targeting signal signature appears at 373–375 (SHL).

It belongs to the Nudix hydrolase family. Monomer. Requires Mg(2+) as cofactor. The cofactor is Mn(2+).

It is found in the peroxisome. The enzyme catalyses an acyl-CoA + H2O = an acyl-4'-phosphopantetheine + adenosine 3',5'-bisphosphate + 2 H(+). The catalysed reaction is CoA + H2O = (R)-4'-phosphopantetheine + adenosine 3',5'-bisphosphate + 2 H(+). It carries out the reaction hexanoyl-CoA + H2O = hexanoyl-4'-phosphopantetheine + adenosine 3',5'-bisphosphate + 2 H(+). It catalyses the reaction octanoyl-CoA + H2O = S-octanoyl-4'-phosphopantetheine + adenosine 3',5'-bisphosphate + 2 H(+). The enzyme catalyses butanoyl-CoA + H2O = S-butanoyl-4'-phosphopantetheine + adenosine 3',5'-bisphosphate + 2 H(+). The catalysed reaction is propanoyl-CoA + H2O = propanoyl-4'-phosphopantetheine + adenosine 3',5'-bisphosphate + 2 H(+). It carries out the reaction malonyl-CoA + H2O = malonyl-4'-phosphopantetheine + adenosine 3',5'-bisphosphate + 2 H(+). It catalyses the reaction succinyl-CoA + H2O = succinyl-4'-phosphopantetheine + adenosine 3',5'-bisphosphate + 2 H(+). The enzyme catalyses choloyl-CoA + H2O = S-choloyl-4'-phosphopantetheine + adenosine 3',5'-bisphosphate + 2 H(+). The catalysed reaction is 4,8-dimethylnonanoyl-CoA + H2O = S-(4,8-dimethylnonanoyl)-4'-phosphopantetheine + adenosine 3',5'-bisphosphate + 2 H(+). It carries out the reaction (9Z,12Z,15Z)-octadecatrienoyl-CoA + H2O = S-(9Z,12Z,15Z-octadecatrienoyl)-4'-phosphopantetheine + adenosine 3',5'-bisphosphate + 2 H(+). It catalyses the reaction (9Z,12Z)-octadecadienoyl-CoA + H2O = S-(9Z,12Z-octadecadienoyl)-4'-phosphopantetheine + adenosine 3',5'-bisphosphate + 2 H(+). The enzyme catalyses (9Z)-hexadecenoyl-CoA + H2O = S-(9Z-hexadecenoyl)-4'-phosphopantetheine + adenosine 3',5'-bisphosphate + 2 H(+). The catalysed reaction is (9Z)-tetradecenoyl-CoA + H2O = S-(9Z-tetradecenoyl)-4'-phosphopantetheine + adenosine 3',5'-bisphosphate + 2 H(+). It carries out the reaction (6Z)-octenoyl-CoA + H2O = S-(6Z-octenoyl)-4'-phosphopantetheine + adenosine 3',5'-bisphosphate + 2 H(+). It catalyses the reaction hexadecanoyl-CoA + H2O = S-hexadecanoyl-4'-phosphopantetheine + adenosine 3',5'-bisphosphate + 2 H(+). The enzyme catalyses tetradecanoyl-CoA + H2O = tetradecanoyl-4'-phosphopantetheine + adenosine 3',5'-bisphosphate + 2 H(+). The catalysed reaction is dodecanoyl-CoA + H2O = S-dodecanoyl-4'-phosphopantetheine + adenosine 3',5'-bisphosphate + 2 H(+). It carries out the reaction a 5'-end CoA-ribonucleoside in mRNA + H2O = a 5'-end phospho-adenosine-phospho-ribonucleoside in mRNA + (R)-4'-phosphopantetheine + 2 H(+). Fatty acyl-coenzyme A (CoA) diphosphatase that hydrolyzes fatty acyl-CoA to yield acyl-4'-phosphopantetheine and adenosine 3',5'-bisphosphate. Mediates the hydrolysis of a wide range of CoA esters, including choloyl-CoA and branched-chain fatty-acyl-CoA esters and at low substrate concentrations medium and long-chain fatty-acyl-CoA esters are the primary substrates. Highest activity seen with medium-chain acyl-CoA esters and higher rates of activity seen with the unsaturated acyl-CoA esters compared with the saturated esters. Exhibits decapping activity towards dpCoA-capped RNAs in vitro. The polypeptide is Acyl-coenzyme A diphosphatase NUDT19 (NUDT19) (Homo sapiens (Human)).